Consider the following 541-residue polypeptide: Peptidyl-alpha-hydroxyglycine alpha-amidating lyase 1 (541 aa).

An N-terminal signal peptide occupies residues 1–33; it reads MKSTDSAKCLGSKSLAICCLLLHLLLCIRPAVS. Residues 34–458 are Extracellular-facing; the sequence is QTQSPQRYLH…VAVHHPSGKA (425 aa). N-linked (GlcNAc...) asparagine glycosylation is present at Asn92. 3 NHL repeats span residues 164–205, 215–258, and 272–314; these read GKVQ…FPPR, LGDA…YSRK, and GISY…FLSS. 2 cysteine pairs are disulfide-bonded: Cys228–Cys248 and Cys299–Cys310. The N-linked (GlcNAc...) asparagine glycan is linked to Asn315. The stretch at 374–418 is one NHL 4 repeat; that stretch reads KQLVSKFGPNNLQFQNPHDVAVTADGNEIYVAELNPMRIHKFVHR. A helical membrane pass occupies residues 459–479; that stretch reads ILVASLMLLFAGSTFALALIF. The Cytoplasmic portion of the chain corresponds to 480–541; the sequence is ARRRKRGCLP…TKTLASAQYA (62 aa). A disordered region spans residues 521–541; it reads LDQQASDEEQETKTLASAQYA.

It belongs to the peptidyl-alpha-hydroxyglycine alpha-amidating lyase family. Requires Zn(2+) as cofactor. N-glycosylated. In terms of tissue distribution, widely expressed. In mature larvae, it is ubiquitously expressed with a low expression in all cells and a stronger expression in a subset of neurons. Colocalizes with neuropeptide proctolin. In adults, weak expression is observed in most neuronal cell bodies and in scattered large cells throughout the protocerebrum and also in the subesophageal neuromeres (at protein level).

It localises to the cell membrane. It catalyses the reaction a [peptide]-C-terminal (2S)-2-hydroxyglycine = a [peptide]-C-terminal amide + glyoxylate. Functionally, peptidyl-alpha-hydroxylglycine alpha-amidating lyase that catalyzes an essential reaction in C-terminal alpha-amidation of peptides. Mediates the dismutation of the unstable peptidyl(2-hydroxyglycine) intermediate to glyoxylate and the corresponding desglycine peptide amide. C-terminal amidation of peptides such as neuropeptides is essential for full biological activity. The sequence is that of Peptidyl-alpha-hydroxyglycine alpha-amidating lyase 1 (Pal1) from Drosophila melanogaster (Fruit fly).